The sequence spans 506 residues: Maturase K (506 aa).

The protein belongs to the intron maturase 2 family. MatK subfamily.

The protein resides in the plastid. The protein localises to the chloroplast. Functionally, usually encoded in the trnK tRNA gene intron. Probably assists in splicing its own and other chloroplast group II introns. In Cytisus scoparius (Scotch broom), this protein is Maturase K.